A 293-amino-acid chain; its full sequence is Elongation factor Ts (293 aa).

The involved in Mg(2+) ion dislocation from EF-Tu stretch occupies residues 80 to 83; it reads TDFV.

It belongs to the EF-Ts family.

It is found in the cytoplasm. Its function is as follows. Associates with the EF-Tu.GDP complex and induces the exchange of GDP to GTP. It remains bound to the aminoacyl-tRNA.EF-Tu.GTP complex up to the GTP hydrolysis stage on the ribosome. This chain is Elongation factor Ts, found in Burkholderia pseudomallei (strain 1106a).